Reading from the N-terminus, the 330-residue chain is Probable deoxyhypusine synthase (330 aa).

Positions methionine 1–aspartate 25 are disordered. Lysine 298 (nucleophile) is an active-site residue.

This sequence belongs to the deoxyhypusine synthase family. It depends on NAD(+) as a cofactor.

It catalyses the reaction [eIF5A protein]-L-lysine + spermidine = [eIF5A protein]-deoxyhypusine + propane-1,3-diamine. The protein operates within protein modification; eIF5A hypusination. Its function is as follows. Catalyzes the NAD-dependent oxidative cleavage of spermidine and the subsequent transfer of the butylamine moiety of spermidine to the epsilon-amino group of a specific lysine residue of the eIF-5A precursor protein to form the intermediate deoxyhypusine residue. This chain is Probable deoxyhypusine synthase, found in Halobacterium salinarum (strain ATCC 29341 / DSM 671 / R1).